We begin with the raw amino-acid sequence, 357 residues long: Crh-like protein 1 (357 aa).

The N-terminal stretch at 1–17 is a signal peptide; that stretch reads MMLPLLAVSAFASLGAA. The GH16 domain maps to 20 to 220; the sequence is YTSCNPTNSL…WAGGETDYDE (201 aa). Residues asparagine 52 and asparagine 92 are each glycosylated (N-linked (GlcNAc...) asparagine). Glutamate 109 acts as the Nucleophile in catalysis. Glutamate 113 acts as the Proton donor in catalysis. Position 113 (glutamate 113) interacts with chitin. Residue asparagine 131 is glycosylated (N-linked (GlcNAc...) asparagine). Chitin-binding residues include lysine 193, tryptophan 197, and threonine 208. N-linked (GlcNAc...) asparagine glycosylation is found at asparagine 242 and asparagine 257. Glycine 326 carries GPI-anchor amidated glycine lipidation. The propeptide at 327–357 is removed in mature form; that stretch reads SASAVFTGAAVTNLPSFFFTVFFALAIALAF. A helical membrane pass occupies residues 337 to 357; that stretch reads VTNLPSFFFTVFFALAIALAF.

It belongs to the glycosyl hydrolase 16 family. CRH1 subfamily. Post-translationally, the GPI-like anchor contains a phosphoceramide lipid group. The anchor position has not been determined.

The protein localises to the cell membrane. Its subcellular location is the secreted. It localises to the cell wall. The enzyme catalyses Random endo-hydrolysis of N-acetyl-beta-D-glucosaminide (1-&gt;4)-beta-linkages in chitin and chitodextrins.. In terms of biological role, dual chitinase/transglycosylase that plays a role in cell wall architecture. Chitinase and transglycosylase activities are coupled. Required for the polysaccharide cross-linking at the septa and the cell wall. More specifically, transfers chitin to 1,6-beta-glucan in the cell wall. The sequence is that of Crh-like protein 1 from Aspergillus fumigatus (strain ATCC MYA-4609 / CBS 101355 / FGSC A1100 / Af293) (Neosartorya fumigata).